A 189-amino-acid polypeptide reads, in one-letter code: MKLIVGLGNPEKRHENTRHNIGFEVIDEMARLFQTGMTTGKGNFHHAKITHRGKGVIVLKPMTYMNLSGHAVVAAMNFYKIPVEEILVICDDLNIPLGSIRLRAKGSAGGQNGLKHIIQCLGREDFARLRVGIGRDHPSGSYSSFVLGKFSEEERKTADSIIPECAEAALDFVVHGIEHAMNRFNRKNA.

TRNA is bound at residue His14. The active-site Proton acceptor is His19. TRNA-binding residues include Tyr64, Asn66, and Asn112.

It belongs to the PTH family. Monomer.

Its subcellular location is the cytoplasm. It carries out the reaction an N-acyl-L-alpha-aminoacyl-tRNA + H2O = an N-acyl-L-amino acid + a tRNA + H(+). Its function is as follows. Hydrolyzes ribosome-free peptidyl-tRNAs (with 1 or more amino acids incorporated), which drop off the ribosome during protein synthesis, or as a result of ribosome stalling. Catalyzes the release of premature peptidyl moieties from peptidyl-tRNA molecules trapped in stalled 50S ribosomal subunits, and thus maintains levels of free tRNAs and 50S ribosomes. This Chlorobium phaeobacteroides (strain BS1) protein is Peptidyl-tRNA hydrolase.